The primary structure comprises 206 residues: Probable GTP-binding protein EngB (206 aa).

Positions 27-201 constitute an EngB-type G domain; the sequence is SGIEVAFAGR…EEKLNQWYSK (175 aa). Residues 35 to 42, 62 to 66, 80 to 83, 147 to 150, and 180 to 182 contribute to the GTP site; these read GRSNAGKS, GRTQL, DLPG, TKAD, and FSS. Mg(2+)-binding residues include S42 and T64.

The protein belongs to the TRAFAC class TrmE-Era-EngA-EngB-Septin-like GTPase superfamily. EngB GTPase family. It depends on Mg(2+) as a cofactor.

In terms of biological role, necessary for normal cell division and for the maintenance of normal septation. The chain is Probable GTP-binding protein EngB from Idiomarina loihiensis (strain ATCC BAA-735 / DSM 15497 / L2-TR).